The sequence spans 212 residues: Glycerol-3-phosphate acyltransferase (212 aa).

A run of 6 helical transmembrane segments spans residues 6–26 (IAVL…GLIL), 56–76 (LAAL…LLAH), 92–112 (LTLI…WLGF), 122–142 (LGVS…AWLL), 150–170 (SSVG…FMPA), and 171–191 (SHEI…LLLW).

Belongs to the PlsY family. As to quaternary structure, probably interacts with PlsX.

The protein localises to the cell inner membrane. It carries out the reaction an acyl phosphate + sn-glycerol 3-phosphate = a 1-acyl-sn-glycero-3-phosphate + phosphate. Its pathway is lipid metabolism; phospholipid metabolism. Its function is as follows. Catalyzes the transfer of an acyl group from acyl-phosphate (acyl-PO(4)) to glycerol-3-phosphate (G3P) to form lysophosphatidic acid (LPA). This enzyme utilizes acyl-phosphate as fatty acyl donor, but not acyl-CoA or acyl-ACP. The sequence is that of Glycerol-3-phosphate acyltransferase from Zymomonas mobilis subsp. mobilis (strain ATCC 31821 / ZM4 / CP4).